The primary structure comprises 766 residues: MVSSSSYDVSAALKQEGLKSSDWDEICRRLGREPNRAELGMFGVMWSEHCCYRNSRPLLSGFPTEGPRILVGPGENAGVVDLGDGHRLAFKIESHNHPSAVEPFQGAATGVGGILRDIFTMGARPIALLNALRFGPLDDSANVGLMEGVVAGIAHYGNCVGVPTVGGEVAFDPSYSGNPLVNAMALGLMETKDIVKSGAIGVGNPVVYVGSTTGRDGMGGASFASAELSADSLDDRPAVQVGDPFLEKGLIEACLEAFDSGDVVAAQDMGAAGLTCSCSEMAAKGGLGVELDLDRVPARESGMTAYEFLLSESQERMLFVVKAGREEPLMKRFRRWGLQAAVVGQVLEEPIVRVLHHGEVAAEVPATALADDTPIEKHALLSEPPVDLQEHWQWTEAQLPDLADPAAALLGLLDDPTIASKRWVHRQYDQQVLANTVVSSGAADAAVIRLRPQQGDGSLKTTTRGVAATVDCPNRWVALDPERGAMAAVAEAARNLSCVGSEPLAITDNLNFPSPETPKGFWQLAMACRGISEACKAFQTPVTGGNVSLYNETRRDDGSLQPIHPTPVIGMVGVVDDITKVTGLGWCQPGDVVVLLGVKPDADQDDRVGLAGSSYQQFTLGTITGRPPRIDFDLEKRVQGLVRQAIADGLIASAHDSSDGGLAVALAECSIASGFGVELTLSVGTMSPARLLFAEGGARVVVSVKADQLTRWQTMLTSNPDVSTTVLGTVASHGRFQLSFGVGSTIDLSVDQLQQVYADALPRRLA.

Residue histidine 49 is part of the active site. The ATP site is built by tyrosine 52 and lysine 91. Glutamate 93 contributes to the Mg(2+) binding site. Substrate is bound by residues 94–97 (SHNH) and arginine 116. The active-site Proton acceptor is histidine 95. Aspartate 117 is a binding site for Mg(2+). Substrate is bound at residue glutamine 240. Aspartate 268 is a Mg(2+) binding site. A substrate-binding site is contributed by 312–314 (ESQ). Residues aspartate 508 and glycine 545 each coordinate ATP. Asparagine 546 is a Mg(2+) binding site. Serine 548 lines the substrate pocket.

It belongs to the FGAMS family. As to quaternary structure, monomer. Part of the FGAM synthase complex composed of 1 PurL, 1 PurQ and 2 PurS subunits.

Its subcellular location is the cytoplasm. It carries out the reaction N(2)-formyl-N(1)-(5-phospho-beta-D-ribosyl)glycinamide + L-glutamine + ATP + H2O = 2-formamido-N(1)-(5-O-phospho-beta-D-ribosyl)acetamidine + L-glutamate + ADP + phosphate + H(+). It functions in the pathway purine metabolism; IMP biosynthesis via de novo pathway; 5-amino-1-(5-phospho-D-ribosyl)imidazole from N(2)-formyl-N(1)-(5-phospho-D-ribosyl)glycinamide: step 1/2. Part of the phosphoribosylformylglycinamidine synthase complex involved in the purines biosynthetic pathway. Catalyzes the ATP-dependent conversion of formylglycinamide ribonucleotide (FGAR) and glutamine to yield formylglycinamidine ribonucleotide (FGAM) and glutamate. The FGAM synthase complex is composed of three subunits. PurQ produces an ammonia molecule by converting glutamine to glutamate. PurL transfers the ammonia molecule to FGAR to form FGAM in an ATP-dependent manner. PurS interacts with PurQ and PurL and is thought to assist in the transfer of the ammonia molecule from PurQ to PurL. The chain is Phosphoribosylformylglycinamidine synthase subunit PurL from Synechococcus sp. (strain CC9902).